A 458-amino-acid chain; its full sequence is MSSGRIVQIIGAVIDVEFPRDQVPNVYEALKVQGAETTLEVQQQLGDGVVRTIAMGSTEGLKRGLDVNSTGKAISVPVGKATLGRIMDVLGNPIDEAGPIGEEEQWEIHRAAPSYAEQAGGNDLLETGIKVIDLVCPFAKGGKVGLFGGAGVGKTVNMMELIRNIAIEHSGYSVFAGVGERTREGNDFYHEMKDSNVLDKVALVYGQMNEPPGNRLRVALTGLTMAEKFRDEGRDVLLFVDNIYRYTLAGTEVSALLGRMPSAVGYQPTLAEEMGVLQERITSTKKGSITSIQAVYVPADDLTDPSPATTFAHLDATVVLSRDIASLGIYPAVDPLDSTSRQLDPNVIGQEHYETARGVQYVLQRYKELKDIIAILGMDELSEDDKLLVARARKIQRFLSQPFFVAEVFTGAPGKYVSLKDTIAGFSGILKGDYDHLPEQAFYMVGGIDEAIEKAKKL.

G148–T155 is a binding site for ATP.

This sequence belongs to the ATPase alpha/beta chains family. F-type ATPases have 2 components, CF(1) - the catalytic core - and CF(0) - the membrane proton channel. CF(1) has five subunits: alpha(3), beta(3), gamma(1), delta(1), epsilon(1). CF(0) has three main subunits: a(1), b(2) and c(9-12). The alpha and beta chains form an alternating ring which encloses part of the gamma chain. CF(1) is attached to CF(0) by a central stalk formed by the gamma and epsilon chains, while a peripheral stalk is formed by the delta and b chains.

Its subcellular location is the cell inner membrane. It catalyses the reaction ATP + H2O + 4 H(+)(in) = ADP + phosphate + 5 H(+)(out). Functionally, produces ATP from ADP in the presence of a proton gradient across the membrane. The catalytic sites are hosted primarily by the beta subunits. The protein is ATP synthase subunit beta of Ectopseudomonas mendocina (strain ymp) (Pseudomonas mendocina).